Reading from the N-terminus, the 555-residue chain is Probable terpene synthase 6 (555 aa).

Mg(2+) contacts are provided by D309, D313, and E460. Residues D309–D313 carry the DDXXD motif motif.

It belongs to the terpene synthase family. Mg(2+) is required as a cofactor.

Its function is as follows. Probable sesquiterpene synthase. This is Probable terpene synthase 6 (TPS6) from Ricinus communis (Castor bean).